Here is a 107-residue protein sequence, read N- to C-terminus: L-rhamnose mutarotase (107 aa).

Residue Y21 participates in substrate binding. H25 (proton donor) is an active-site residue. Residues Y44 and W79–W80 each bind substrate.

The protein belongs to the rhamnose mutarotase family. As to quaternary structure, homodimer.

It localises to the cytoplasm. The enzyme catalyses alpha-L-rhamnose = beta-L-rhamnose. It functions in the pathway carbohydrate metabolism; L-rhamnose metabolism. Its function is as follows. Involved in the anomeric conversion of L-rhamnose. This chain is L-rhamnose mutarotase, found in Agrobacterium fabrum (strain C58 / ATCC 33970) (Agrobacterium tumefaciens (strain C58)).